Consider the following 112-residue polypeptide: MEAYEQVQKGPLKLKGVAELGVTKRKKKKKDKDKAKMLEAMGTSKKNEEEKRRCLDKRTPAQAAFEKMQEKRQMERILKKASKTHKQRVEDFNRHLDTLTEHYDIPKVSWTK.

Residues 23–56 (TKRKKKKKDKDKAKMLEAMGTSKKNEEEKRRCLD) form a disordered region. The segment covering 45-56 (KKNEEEKRRCLD) has biased composition (basic and acidic residues).

Belongs to the FAM32 family.

The protein resides in the nucleus. May induce G2 arrest and apoptosis. May also increase cell sensitivity to apoptotic stimuli. This Rattus norvegicus (Rat) protein is Protein FAM32A (Fam32a).